Consider the following 183-residue polypeptide: ATP synthase subunit delta (183 aa).

It belongs to the ATPase delta chain family. As to quaternary structure, F-type ATPases have 2 components, F(1) - the catalytic core - and F(0) - the membrane proton channel. F(1) has five subunits: alpha(3), beta(3), gamma(1), delta(1), epsilon(1). F(0) has three main subunits: a(1), b(2) and c(10-14). The alpha and beta chains form an alternating ring which encloses part of the gamma chain. F(1) is attached to F(0) by a central stalk formed by the gamma and epsilon chains, while a peripheral stalk is formed by the delta and b chains.

Its subcellular location is the cell inner membrane. In terms of biological role, f(1)F(0) ATP synthase produces ATP from ADP in the presence of a proton or sodium gradient. F-type ATPases consist of two structural domains, F(1) containing the extramembraneous catalytic core and F(0) containing the membrane proton channel, linked together by a central stalk and a peripheral stalk. During catalysis, ATP synthesis in the catalytic domain of F(1) is coupled via a rotary mechanism of the central stalk subunits to proton translocation. Its function is as follows. This protein is part of the stalk that links CF(0) to CF(1). It either transmits conformational changes from CF(0) to CF(1) or is implicated in proton conduction. The protein is ATP synthase subunit delta of Desulforapulum autotrophicum (strain ATCC 43914 / DSM 3382 / VKM B-1955 / HRM2) (Desulfobacterium autotrophicum).